The primary structure comprises 491 residues: 1-aminocyclopropane-1-carboxylate synthase (491 aa).

At Lys-278 the chain carries N6-(pyridoxal phosphate)lysine.

It belongs to the class-I pyridoxal-phosphate-dependent aminotransferase family. In terms of assembly, homodimer. Pyridoxal 5'-phosphate is required as a cofactor.

The catalysed reaction is S-adenosyl-L-methionine = 1-aminocyclopropane-1-carboxylate + S-methyl-5'-thioadenosine + H(+). Its pathway is alkene biosynthesis; ethylene biosynthesis via S-adenosyl-L-methionine; ethylene from S-adenosyl-L-methionine: step 1/2. Its function is as follows. Catalyzes the formation of 1-aminocyclopropane-1-carboxylate, a direct precursor of ethylene in higher plants. The sequence is that of 1-aminocyclopropane-1-carboxylate synthase (ACS1) from Nicotiana tabacum (Common tobacco).